The sequence spans 1150 residues: Serine/threonine-protein phosphatase 2A regulatory subunit B'' subunit alpha (1150 aa).

A disordered region spans residues 661–693 (PEVIKIQNKPEKKPGTPLPPPATSPSSPRPLSP). Residues 676–693 (TPLPPPATSPSSPRPLSP) are compositionally biased toward pro residues. EF-hand domains lie at 758 to 793 (CPLYWKAPMFRAAGGEKTGFVTAQSFIAMWRKLLNN) and 972 to 1007 (RNPTSIEYWFRCMDVDGDGVLSMYELEYFYEEQCER). Ca(2+) is bound by residues D985, D987, D989, and E996. Residues 1105-1132 (AQFQEGFEDYETDEPASPSEFGNKSNKI) are disordered.

In terms of assembly, PP2A consists of a common heterodimeric core enzyme, composed of a 36 kDa catalytic subunit (subunit C) and a 65 kDa constant regulatory subunit (PR65 or subunit A), that associates with a variety of regulatory subunits. Proteins that associate with the core dimer include three families of regulatory subunits B (the R2/B/PR55/B55, R3/B''/PR72/PR130/PR59 and R5/B'/B56 families), the 48 kDa variable regulatory subunit, viral proteins, and cell signaling molecules. In terms of tissue distribution, expressed in heart, brain, placenta, lung, muscle and kidney.

The B regulatory subunit might modulate substrate selectivity and catalytic activity, and might also direct the localization of the catalytic enzyme to a particular subcellular compartment. This is Serine/threonine-protein phosphatase 2A regulatory subunit B'' subunit alpha (PPP2R3A) from Homo sapiens (Human).